The following is a 397-amino-acid chain: Decapping and exoribonuclease protein (397 aa).

The span at 1–20 shows a compositional bias: basic and acidic residues; the sequence is MESRGTKREAGKIEVAEPRN. A disordered region spans residues 1-37; that stretch reads MESRGTKREAGKIEVAEPRNKLPRPAPSLPTDPALYS. Arginine 58 contributes to the substrate binding site. Residues 67–88 are disordered; that stretch reads LRYYSPPPTNGQSPNFDLRDGY. Residues glutamate 101 and 131–133 contribute to the substrate site; that span reads WRG. Glutamate 192 serves as a coordination point for Mg(2+). 2 residues coordinate substrate: cysteine 217 and glutamate 234. Residues glutamate 234, aspartate 236, glutamate 253, and leucine 254 each coordinate Mg(2+). Substrate is bound by residues lysine 255 and glutamine 280. Threonine 392 is subject to Phosphothreonine. Position 394 is a phosphoserine (serine 394).

Belongs to the DXO/Dom3Z family. Mg(2+) serves as cofactor.

The protein localises to the nucleus. It carries out the reaction a 5'-end triphospho-ribonucleoside in mRNA + H2O = a 5'-end phospho-ribonucleoside in mRNA + diphosphate + H(+). The catalysed reaction is a 5'-end NAD(+)-phospho-ribonucleoside in mRNA + H2O = a 5'-end phospho-ribonucleoside in mRNA + NAD(+) + H(+). It catalyses the reaction a 5'-end NAD(+)-phospho-ribonucleoside in snoRNA + H2O = a 5'-end phospho-ribonucleoside in snoRNA + NAD(+) + H(+). The enzyme catalyses a 5'-end (N(7)-methyl 5'-triphosphoguanosine)-ribonucleoside-ribonucleotide in mRNA + H2O = a (N(7)-methyl 5'-triphosphoguanosine)-nucleoside + a 5'-end phospho-ribonucleoside in mRNA + H(+). It carries out the reaction a 5'-end FAD-phospho-ribonucleoside in mRNA + H2O = a 5'-end phospho-ribonucleoside in mRNA + FAD + H(+). The catalysed reaction is a 5'-end CoA-ribonucleoside in mRNA + H2O = 3'-dephospho-CoA + a 5'-end phospho-ribonucleoside in mRNA + H(+). Decapping enzyme for NAD-capped RNAs: specifically hydrolyzes the nicotinamide adenine dinucleotide (NAD) cap from a subset of RNAs by removing the entire NAD moiety from the 5'-end of an NAD-capped RNA. The NAD-cap is present at the 5'-end of some RNAs and snoRNAs. In contrast to the canonical 5'-end N7 methylguanosine (m7G) cap, the NAD cap promotes mRNA decay. Preferentially acts on NAD-capped transcripts in response to environmental stress. Also acts as a non-canonical decapping enzyme that removes the entire cap structure of m7G capped or incompletely capped RNAs and mediates their subsequent degradation. Specifically degrades pre-mRNAs with a defective 5'-end m7G cap and is part of a pre-mRNA capping quality control. Has decapping activity toward incomplete 5'-end m7G cap mRNAs such as unmethylated 5'-end-capped RNA (cap0), while it has no activity toward 2'-O-ribose methylated m7G cap (cap1). In contrast to canonical decapping enzymes DCP2 and NUDT16, which cleave the cap within the triphosphate linkage, the decapping activity releases the entire cap structure GpppN and a 5'-end monophosphate RNA. Also has 5'-3' exoribonuclease activities: The 5'-end monophosphate RNA is then degraded by the 5'-3' exoribonuclease activity, enabling this enzyme to decap and degrade incompletely capped mRNAs. Also possesses RNA 5'-pyrophosphohydrolase activity by hydrolyzing the 5'-end triphosphate to release pyrophosphates. Exhibits decapping activity towards FAD-capped RNAs. Exhibits decapping activity towards dpCoA-capped RNAs in vitro. The sequence is that of Decapping and exoribonuclease protein from Bos taurus (Bovine).